The following is a 131-amino-acid chain: Translation initiation factor 5A (131 aa).

The residue at position 36 (Lys-36) is a Hypusine.

It belongs to the eIF-5A family.

It localises to the cytoplasm. In terms of biological role, functions by promoting the formation of the first peptide bond. In Metallosphaera sedula (strain ATCC 51363 / DSM 5348 / JCM 9185 / NBRC 15509 / TH2), this protein is Translation initiation factor 5A (eIF5A).